Here is a 363-residue protein sequence, read N- to C-terminus: Flagellar P-ring protein (363 aa).

A signal peptide spans 1–20; sequence MKCKLIFAVFMLAFSMPSQA.

Belongs to the FlgI family. The basal body constitutes a major portion of the flagellar organelle and consists of four rings (L,P,S, and M) mounted on a central rod.

It is found in the periplasm. The protein localises to the bacterial flagellum basal body. Assembles around the rod to form the L-ring and probably protects the motor/basal body from shearing forces during rotation. This chain is Flagellar P-ring protein, found in Shewanella oneidensis (strain ATCC 700550 / JCM 31522 / CIP 106686 / LMG 19005 / NCIMB 14063 / MR-1).